The primary structure comprises 156 residues: Crossover junction endodeoxyribonuclease RuvC (156 aa).

Active-site residues include aspartate 7, glutamate 67, and aspartate 139. Positions 7, 67, and 139 each coordinate Mg(2+).

Belongs to the RuvC family. Homodimer which binds Holliday junction (HJ) DNA. The HJ becomes 2-fold symmetrical on binding to RuvC with unstacked arms; it has a different conformation from HJ DNA in complex with RuvA. In the full resolvosome a probable DNA-RuvA(4)-RuvB(12)-RuvC(2) complex forms which resolves the HJ. Requires Mg(2+) as cofactor.

It localises to the cytoplasm. The enzyme catalyses Endonucleolytic cleavage at a junction such as a reciprocal single-stranded crossover between two homologous DNA duplexes (Holliday junction).. In terms of biological role, the RuvA-RuvB-RuvC complex processes Holliday junction (HJ) DNA during genetic recombination and DNA repair. Endonuclease that resolves HJ intermediates. Cleaves cruciform DNA by making single-stranded nicks across the HJ at symmetrical positions within the homologous arms, yielding a 5'-phosphate and a 3'-hydroxyl group; requires a central core of homology in the junction. The consensus cleavage sequence is 5'-(A/T)TT(C/G)-3'. Cleavage occurs on the 3'-side of the TT dinucleotide at the point of strand exchange. HJ branch migration catalyzed by RuvA-RuvB allows RuvC to scan DNA until it finds its consensus sequence, where it cleaves and resolves the cruciform DNA. This is Crossover junction endodeoxyribonuclease RuvC from Sphingopyxis alaskensis (strain DSM 13593 / LMG 18877 / RB2256) (Sphingomonas alaskensis).